The sequence spans 57 residues: MSYSSFKIILIHVKNIIPIITATLILNYLNNSERSLVKQILIEDEIIVCATYLIPDI.

This is an uncharacterized protein from Escherichia coli (strain K12).